A 152-amino-acid chain; its full sequence is Endoribonuclease YbeY (152 aa).

The Zn(2+) site is built by histidine 113, histidine 117, and histidine 123.

The protein belongs to the endoribonuclease YbeY family. The cofactor is Zn(2+).

It is found in the cytoplasm. In terms of biological role, single strand-specific metallo-endoribonuclease involved in late-stage 70S ribosome quality control and in maturation of the 3' terminus of the 16S rRNA. The protein is Endoribonuclease YbeY of Janthinobacterium sp. (strain Marseille) (Minibacterium massiliensis).